The following is a 354-amino-acid chain: Fructose-bisphosphate aldolase (354 aa).

Residue Ser-61 coordinates D-glyceraldehyde 3-phosphate. The active-site Proton donor is the Asp-104. His-105, Asp-139, Glu-169, and His-221 together coordinate Zn(2+). Residue Gly-222 coordinates dihydroxyacetone phosphate. Residue His-260 coordinates Zn(2+). Dihydroxyacetone phosphate contacts are provided by residues 261-263 (GGS) and 282-285 (NIDT).

It belongs to the class II fructose-bisphosphate aldolase family. Homodimer. Zn(2+) is required as a cofactor.

The enzyme catalyses beta-D-fructose 1,6-bisphosphate = D-glyceraldehyde 3-phosphate + dihydroxyacetone phosphate. It participates in carbohydrate degradation; glycolysis; D-glyceraldehyde 3-phosphate and glycerone phosphate from D-glucose: step 4/4. Its function is as follows. Catalyzes the aldol condensation of dihydroxyacetone phosphate (DHAP or glycerone-phosphate) with glyceraldehyde 3-phosphate (G3P) to form fructose 1,6-bisphosphate (FBP) in gluconeogenesis and the reverse reaction in glycolysis. The sequence is that of Fructose-bisphosphate aldolase (fba) from Campylobacter jejuni subsp. jejuni serotype O:2 (strain ATCC 700819 / NCTC 11168).